Consider the following 497-residue polypeptide: Glycerol kinase (497 aa).

Thr12 lines the ADP pocket. The ATP site is built by Thr12, Thr13, and Ser14. Position 12 (Thr12) interacts with sn-glycerol 3-phosphate. Residue Arg16 coordinates ADP. Residues Arg82, Glu83, Tyr134, and Asp243 each contribute to the sn-glycerol 3-phosphate site. Glycerol-binding residues include Arg82, Glu83, Tyr134, Asp243, and Gln244. ADP-binding residues include Thr265 and Gly308. Residues Thr265, Gly308, Gln312, and Gly411 each coordinate ATP. Residue Gly411 coordinates ADP.

The protein belongs to the FGGY kinase family.

The enzyme catalyses glycerol + ATP = sn-glycerol 3-phosphate + ADP + H(+). Its pathway is polyol metabolism; glycerol degradation via glycerol kinase pathway; sn-glycerol 3-phosphate from glycerol: step 1/1. With respect to regulation, inhibited by fructose 1,6-bisphosphate (FBP). Its function is as follows. Key enzyme in the regulation of glycerol uptake and metabolism. Catalyzes the phosphorylation of glycerol to yield sn-glycerol 3-phosphate. The polypeptide is Glycerol kinase (Rhizobium meliloti (strain 1021) (Ensifer meliloti)).